The primary structure comprises 370 residues: Aminomethyltransferase (370 aa).

The protein belongs to the GcvT family. As to quaternary structure, the glycine cleavage system is composed of four proteins: P, T, L and H.

The catalysed reaction is N(6)-[(R)-S(8)-aminomethyldihydrolipoyl]-L-lysyl-[protein] + (6S)-5,6,7,8-tetrahydrofolate = N(6)-[(R)-dihydrolipoyl]-L-lysyl-[protein] + (6R)-5,10-methylene-5,6,7,8-tetrahydrofolate + NH4(+). In terms of biological role, the glycine cleavage system catalyzes the degradation of glycine. In Stenotrophomonas maltophilia (strain K279a), this protein is Aminomethyltransferase.